The chain runs to 263 residues: Hydroxyethylthiazole kinase (263 aa).

M41 lines the substrate pocket. 2 residues coordinate ATP: R117 and S163. Position 190 (G190) interacts with substrate.

It belongs to the Thz kinase family. Requires Mg(2+) as cofactor.

It catalyses the reaction 5-(2-hydroxyethyl)-4-methylthiazole + ATP = 4-methyl-5-(2-phosphooxyethyl)-thiazole + ADP + H(+). It participates in cofactor biosynthesis; thiamine diphosphate biosynthesis; 4-methyl-5-(2-phosphoethyl)-thiazole from 5-(2-hydroxyethyl)-4-methylthiazole: step 1/1. Functionally, catalyzes the phosphorylation of the hydroxyl group of 4-methyl-5-beta-hydroxyethylthiazole (THZ). In Lactiplantibacillus plantarum (strain ATCC BAA-793 / NCIMB 8826 / WCFS1) (Lactobacillus plantarum), this protein is Hydroxyethylthiazole kinase.